Consider the following 644-residue polypeptide: N-acetylgalactosaminyltransferase 4 (644 aa).

Residues 1-13 (MAIKKRYVKRLLR) lie on the Cytoplasmic side of the membrane. A helical; Signal-anchor for type II membrane protein transmembrane segment spans residues 14–34 (KVVLLLVVIVTVSLVTTLVVE). The Lumenal portion of the chain corresponds to 35–644 (RRMKNAAELT…MLDTFYDGLK (610 aa)). N-linked (GlcNAc...) asparagine glycosylation is found at Asn-157 and Asn-179. The interval 177 to 288 (LPNISVIFIF…YNWLPPLIEP (112 aa)) is catalytic subdomain A. Substrate is bound by residues Asp-218 and Arg-249. A Mn(2+)-binding site is contributed by Asp-272. Ser-273 contributes to the substrate binding site. Residue His-274 coordinates Mn(2+). The tract at residues 345–407 (PYRSPVMMGG…PCSRVAHIFR (63 aa)) is catalytic subdomain B. A substrate-binding site is contributed by Trp-376. His-404 is a Mn(2+) binding site. Arg-407 lines the substrate pocket. Positions 496–629 (AAGIIQNVAN…GNDRQRWEFG (134 aa)) constitute a Ricin B-type lectin domain. Residues Cys-509 and Cys-526 are joined by a disulfide bond. Asn-529 and Asn-565 each carry an N-linked (GlcNAc...) asparagine glycan. 2 cysteine pairs are disulfide-bonded: Cys-556–Cys-573 and Cys-600–Cys-617. Asn-632 carries N-linked (GlcNAc...) asparagine glycosylation.

It belongs to the glycosyltransferase 2 family. GalNAc-T subfamily. Requires Mn(2+) as cofactor. As to expression, expressed in developing oocytes and egg chambers. During embryonic stages 9-11, expressed in the primordium of the foregut, midgut and hindgut. During embryonic stages 12-13, shows specific expression in the proventriculus that continues until the end of embryogenesis. In third instar larvae, ubiquitously expressed in wing, eye-antennal, leg and haltere imaginal disks.

It localises to the golgi apparatus membrane. The enzyme catalyses L-seryl-[protein] + UDP-N-acetyl-alpha-D-galactosamine = a 3-O-[N-acetyl-alpha-D-galactosaminyl]-L-seryl-[protein] + UDP + H(+). It catalyses the reaction L-threonyl-[protein] + UDP-N-acetyl-alpha-D-galactosamine = a 3-O-[N-acetyl-alpha-D-galactosaminyl]-L-threonyl-[protein] + UDP + H(+). Its pathway is protein modification; protein glycosylation. Functionally, glycopeptide transferase involved in O-linked oligosaccharide biosynthesis, which catalyzes the transfer of an N-acetyl-D-galactosamine residue to an already glycosylated peptide. In contrast to other proteins of the family, it does not act as a peptide transferase that transfers GalNAc onto serine or threonine residue on the protein receptor, but instead requires the prior addition of a GalNAc on a peptide before adding additional GalNAc moieties. Some peptide transferase activity is however not excluded, considering that its appropriate peptide substrate may remain unidentified. Prefers the diglycosylated Muc5AC-3/13 as substrate. In Drosophila melanogaster (Fruit fly), this protein is N-acetylgalactosaminyltransferase 4.